We begin with the raw amino-acid sequence, 523 residues long: GMP synthase [glutamine-hydrolyzing] (523 aa).

Positions 8–205 (RILILDFGSQ…IRELCECEAL (198 aa)) constitute a Glutamine amidotransferase type-1 domain. The active-site Nucleophile is C85. Residues H179 and E181 contribute to the active site. In terms of domain architecture, GMPS ATP-PPase spans 206–398 (WTPSNIISDA…LGLPYDMVYR (193 aa)). Residue 233 to 239 (SGGVDSS) participates in ATP binding.

Homodimer.

The enzyme catalyses XMP + L-glutamine + ATP + H2O = GMP + L-glutamate + AMP + diphosphate + 2 H(+). Its pathway is purine metabolism; GMP biosynthesis; GMP from XMP (L-Gln route): step 1/1. In terms of biological role, catalyzes the synthesis of GMP from XMP. This is GMP synthase [glutamine-hydrolyzing] from Alcanivorax borkumensis (strain ATCC 700651 / DSM 11573 / NCIMB 13689 / SK2).